The primary structure comprises 361 residues: Chorismate synthase (361 aa).

NADP(+) is bound by residues Arg48 and Arg54. Residues 125–127 (RSS), 240–241 (NA), Gly286, 301–305 (KPTSS), and Arg327 contribute to the FMN site.

Belongs to the chorismate synthase family. Homotetramer. The cofactor is FMNH2.

It carries out the reaction 5-O-(1-carboxyvinyl)-3-phosphoshikimate = chorismate + phosphate. The protein operates within metabolic intermediate biosynthesis; chorismate biosynthesis; chorismate from D-erythrose 4-phosphate and phosphoenolpyruvate: step 7/7. In terms of biological role, catalyzes the anti-1,4-elimination of the C-3 phosphate and the C-6 proR hydrogen from 5-enolpyruvylshikimate-3-phosphate (EPSP) to yield chorismate, which is the branch point compound that serves as the starting substrate for the three terminal pathways of aromatic amino acid biosynthesis. This reaction introduces a second double bond into the aromatic ring system. The sequence is that of Chorismate synthase from Magnetococcus marinus (strain ATCC BAA-1437 / JCM 17883 / MC-1).